Here is a 124-residue protein sequence, read N- to C-terminus: Small ribosomal subunit protein uS12c (124 aa).

The protein belongs to the universal ribosomal protein uS12 family. Part of the 30S ribosomal subunit.

Its subcellular location is the plastid. It localises to the chloroplast. Its function is as follows. With S4 and S5 plays an important role in translational accuracy. Located at the interface of the 30S and 50S subunits. In Cyanidium caldarium (Red alga), this protein is Small ribosomal subunit protein uS12c (rps12).